A 471-amino-acid chain; its full sequence is Putative ABC transporter ATP-binding protein STK_11360 (471 aa).

2 consecutive ABC transporter domains span residues 4-241 (LEIK…LEPL) and 255-470 (VILE…VIKD). ATP is bound by residues 37–44 (GKSGSGKS) and 286–293 (GDNGSGKS).

This sequence belongs to the ABC transporter superfamily.

It is found in the cell membrane. Probably part of an ABC transporter complex. Responsible for energy coupling to the transport system. This Sulfurisphaera tokodaii (strain DSM 16993 / JCM 10545 / NBRC 100140 / 7) (Sulfolobus tokodaii) protein is Putative ABC transporter ATP-binding protein STK_11360.